A 494-amino-acid chain; its full sequence is BTB/POZ domain and ankyrin repeat-containing protein NH5.2 (494 aa).

Residues 25–131 enclose the BTB domain; that stretch reads SDVAFSVEGR…LYSGQASVAA (107 aa). Residues 60 to 95 form a disordered region; the sequence is NHQPPPPPPPPLNWPTAGGGGGGSGGGGRGGAGGGG. Residues 61-72 show a composition bias toward pro residues; that stretch reads HQPPPPPPPPLN. A compositionally biased stretch (gly residues) spans 76-95; it reads AGGGGGGSGGGGRGGAGGGG. The C2HC NPR-type zinc finger occupies 137–151; that stretch reads LPGCGARGCWHTRCG. Zn(2+) contacts are provided by Cys140, Cys145, His147, and Cys150. 4 ANK repeats span residues 275–303, 304–334, 339–368, and 372–406; these read NKIRRMRRALDAADIELVKLMVMGEGLDL, DDALAVHYAVQHCNRDVVKALLELGAADVNS, TGKTALHLAAEMVSPDMVSVLLDHHADPNS, and DGVTPLDVLRSLTSEFLFKGAVPGLTHIEPNKLRL. 2 disordered regions span residues 421-443 and 471-494; these read DDGAPVTGGEAGGSDGGNFPRSD and GEGRKSNNGRGSPPPAMYFPNGFA.

It belongs to the plant 'ANKYRIN-BTB/POZ' family. 'NOOT-BOP-COCH-like' (NBCL) subfamily. Homodimer. Interacts with TGAL5, TGAL7, TGAL8 and TGAL9.

It localises to the nucleus. Its subcellular location is the cytoplasm. Its pathway is protein modification; protein ubiquitination. May act as a substrate-specific adapter of an E3 ubiquitin-protein ligase complex (CUL3-RBX1-BTB) which mediates the ubiquitination and subsequent proteasomal degradation of target proteins. Transcriptional co-regulator involved in the promotion of leaf and floral meristem fate and determinacy. Required for the abscission of senescent organs, probably by regulating the cell wall disorganization in abscission zones (AZs, e.g. pulvini at the base of leaves). This chain is BTB/POZ domain and ankyrin repeat-containing protein NH5.2, found in Oryza sativa subsp. japonica (Rice).